The chain runs to 356 residues: 3,4-dihydroxy-2-butanone 4-phosphate synthase (356 aa).

Residues 1-211 are DHBP synthase; sequence MNAILSDQKT…ISDIVEYRMM (211 aa). D-ribulose 5-phosphate contacts are provided by residues 38–39, Asp43, 150–154, and Glu174; these read RE and RIGHT. Residue Glu39 participates in Mg(2+) binding. Residue His153 coordinates Mg(2+). The tract at residues 212–356 is GTP cyclohydrolase II-like; it reads NESLIRVIAE…KSTNVNETVA (145 aa).

It in the N-terminal section; belongs to the DHBP synthase family. In the C-terminal section; belongs to the GTP cyclohydrolase II family. Mg(2+) serves as cofactor. The cofactor is Mn(2+).

It carries out the reaction D-ribulose 5-phosphate = (2S)-2-hydroxy-3-oxobutyl phosphate + formate + H(+). It participates in cofactor biosynthesis; riboflavin biosynthesis; 2-hydroxy-3-oxobutyl phosphate from D-ribulose 5-phosphate: step 1/1. Catalyzes the conversion of D-ribulose 5-phosphate to formate and 3,4-dihydroxy-2-butanone 4-phosphate. The polypeptide is 3,4-dihydroxy-2-butanone 4-phosphate synthase (ribB) (Sulfurospirillum multivorans (Dehalospirillum multivorans)).